A 294-amino-acid polypeptide reads, in one-letter code: Nucleotide-binding protein CLB_3433 (294 aa).

Residue 8 to 15 participates in ATP binding; that stretch reads GLSGAGKT. Residue 59 to 62 coordinates GTP; it reads DIRG.

The protein belongs to the RapZ-like family.

Its function is as follows. Displays ATPase and GTPase activities. In Clostridium botulinum (strain ATCC 19397 / Type A), this protein is Nucleotide-binding protein CLB_3433.